The primary structure comprises 377 residues: Nucleosome assembly protein 1;3 (377 aa).

A coiled-coil region spans residues 26–80 (VNVLKNKLQGLTGKHSNVLENLSPNVRKRVEVLREIQTQHDELEAKFFEERAALE). The Nuclear export signal motif lies at 47-62 (LSPNVRKRVEVLREIQ). The Nuclear localization signal motif lies at 223–228 (KKKPKK). Positions 298 to 377 (EAAQDEDYID…GERPPECKQQ (80 aa)) are disordered. Residues 300 to 341 (AQDEDYIDLEDDEDEEDDEDEDEDEEDEEEEDEDEDDDDEDE) show a composition bias toward acidic residues. The segment covering 345–357 (KTKKKSSAGRKRS) has biased composition (basic residues). At Cys374 the chain carries Cysteine methyl ester. Residue Cys374 is the site of S-farnesyl cysteine attachment. A propeptide spans 375 to 377 (KQQ) (removed in mature form).

It belongs to the nucleosome assembly protein (NAP) family. Can form homomeric and heteromeric protein complexes with NAP1;4. Binds histones H2A and H2B in vivo. Also able to bind histones H1 and H4 in vitro. Interacts with CYCB1;1 and with alpha tubulin.

It localises to the nucleus. The protein localises to the cytoplasm. Its function is as follows. May modulate chromatin structure by regulation of nucleosome assembly/disassembly. Could function together with B-type cyclins in the regulation of microtubule dynamics. The chain is Nucleosome assembly protein 1;3 (NAP1;3) from Nicotiana tabacum (Common tobacco).